A 247-amino-acid polypeptide reads, in one-letter code: 5'-nucleotidase SurE (247 aa).

A divalent metal cation contacts are provided by Asp-8, Asp-9, Ser-39, and Asn-91.

Belongs to the SurE nucleotidase family. Requires a divalent metal cation as cofactor.

The protein resides in the cytoplasm. The catalysed reaction is a ribonucleoside 5'-phosphate + H2O = a ribonucleoside + phosphate. Nucleotidase that shows phosphatase activity on nucleoside 5'-monophosphates. The protein is 5'-nucleotidase SurE of Nitrosomonas eutropha (strain DSM 101675 / C91 / Nm57).